Reading from the N-terminus, the 175-residue chain is Centrosomal protein 20 (175 aa).

A necessary and sufficient for homooligomerization and localization to centrosomes and pericentriolar satellites region spans residues 1-104 (MATIAELKAV…IVEDANGKSV (104 aa)). Residues 49 to 81 (ENLLINELIREYLEFNKYKYSASVLTAEAGQPE) form the LisH domain. Positions 137-166 (RQNLAKPSTERNQKDRIPEPGRMAGTSIEE) are disordered. The span at 144 to 155 (STERNQKDRIPE) shows a compositional bias: basic and acidic residues.

It belongs to the CEP43 family. In terms of assembly, homooligomer; probably required for localization to centrosomes.

Its subcellular location is the cell projection. The protein resides in the cilium. It is found in the cytoplasm. The protein localises to the cytoskeleton. It localises to the cilium basal body. Its subcellular location is the microtubule organizing center. The protein resides in the centrosome. It is found in the cytoplasmic granule. The protein localises to the centriolar satellite. Functionally, involved in the biogenesis of cilia. Required for the recruitment of PLK1 to centrosomes and S phase progression. The protein is Centrosomal protein 20 (CEP20) of Gallus gallus (Chicken).